Here is a 217-residue protein sequence, read N- to C-terminus: Large ribosomal subunit protein uL1 (217 aa).

Belongs to the universal ribosomal protein uL1 family. Part of the 50S ribosomal subunit.

Its function is as follows. Binds directly to 23S rRNA. Probably involved in E site tRNA release. In terms of biological role, protein L1 is also a translational repressor protein, it controls the translation of its operon by binding to its mRNA. This is Large ribosomal subunit protein uL1 from Aeropyrum pernix (strain ATCC 700893 / DSM 11879 / JCM 9820 / NBRC 100138 / K1).